The primary structure comprises 75 residues: Sec-independent protein translocase protein TatA (75 aa).

A helical transmembrane segment spans residues 1–21 (MGGISIWQLLIIVAIIVLLFG). The segment at 50–75 (DAEFKSLNKDESATAGSEKVKDKEQA) is disordered.

The protein belongs to the TatA/E family. In terms of assembly, the Tat system comprises two distinct complexes: a TatABC complex, containing multiple copies of TatA, TatB and TatC subunits, and a separate TatA complex, containing only TatA subunits. Substrates initially bind to the TatABC complex, which probably triggers association of the separate TatA complex to form the active translocon.

It localises to the cell inner membrane. Its function is as follows. Part of the twin-arginine translocation (Tat) system that transports large folded proteins containing a characteristic twin-arginine motif in their signal peptide across membranes. TatA could form the protein-conducting channel of the Tat system. The chain is Sec-independent protein translocase protein TatA from Mannheimia succiniciproducens (strain KCTC 0769BP / MBEL55E).